We begin with the raw amino-acid sequence, 82 residues long: U-actitoxin-Avd3f (82 aa).

Positions 1-16 are cleaved as a signal peptide; sequence MVFLLCFFLVADVSYG. The 51-residue stretch at 21-71 folds into the BPTI/Kunitz inhibitor domain; sequence CLLPMDVGRCRASHPRYYYNSSSKRCEKFIYGGCRGNANNFHTLEECEKVC. 3 cysteine pairs are disulfide-bonded: C21-C71, C30-C54, and C46-C67. Positions 75-82 are excised as a propeptide; it reads SRDSPKEN.

The protein belongs to the venom Kunitz-type family. Sea anemone type 2 potassium channel toxin subfamily.

It is found in the secreted. Its subcellular location is the nematocyst. Dual-function toxin that inhibits both the serine protease trypsin (Kd=30 nM) and voltage-gated potassium channels Kv1.2/KCNA2 (IC(50)=2800 nM). The sequence is that of U-actitoxin-Avd3f from Anemonia viridis (Snakelocks anemone).